A 338-amino-acid polypeptide reads, in one-letter code: Putative clathrin assembly protein At5g10410 (338 aa).

Positions F27 to P157 constitute an ENTH domain.

It localises to the membrane. The protein localises to the clathrin-coated pit. It is found in the golgi apparatus. The protein resides in the cytoplasmic vesicle. Its subcellular location is the clathrin-coated vesicle. This Arabidopsis thaliana (Mouse-ear cress) protein is Putative clathrin assembly protein At5g10410.